Reading from the N-terminus, the 404-residue chain is Type I restriction enzyme EcoR124I/EcoR124II specificity subunit (404 aa).

Positions Met-1 to Lys-153 are target-recognition domain 1. Positions Ser-154–Gly-199 are conserved region 1. The tract at residues Glu-200 to Pro-349 is target-recognition domain 2. The conserved region 2 stretch occupies residues Asn-350–Asn-404.

The protein belongs to the type-I restriction system S methylase family. As to quaternary structure, the type I restriction/modification system is composed of three polypeptides R, M and S; the restriction enzyme has stoichiometry R(2)M(2)S(1) while the methyltransferase is M(2)S(1). There is an equilibrium between R(2)M(2)S(1) and R(1)M(2)S(1); the latter is methylation and translocation proficient but restriction deficient. In terms of assembly, (Microbial infection) Holoenenzyme interacts with Escherichia phage T7 protein Ocr; this interaction leads to the inhibition of the restriction activity, but may still allow methylation and translocation.

Functionally, the specificity (S) subunit of a type I restriction enzyme; this subunit dictates DNA sequence specificity. The presence or absence of a 4-residue repeat changes the sequence specificity; a third copy of TAEL inserted at position 179-180 changes the recognition site from 5'-GAAN(6)RTCG-3' (for EcoR124I) to 5'-GAAN(7)RTCG-3' (for EcoR124II). The M and S subunits together form a methyltransferase (MTase) that methylates A-3 on the top and bottom strand of the sequence 5'-GAAN(7)RTCG-3'. In the presence of the R subunit the complex can also act as an endonuclease, binding to the same target sequence but cutting the DNA some distance from this site. Whether the DNA is cut or modified depends on the methylation state of the target sequence. When the target site is unmodified, the DNA is cut. When the target site is hemimethylated, the complex acts as a maintenance MTase modifying the DNA so that both strands become methylated. After locating a non-methylated recognition site, the enzyme complex serves as a molecular motor that translocates DNA in an ATP-dependent manner until a collision occurs that triggers cleavage. The R(1)M(2)S(1) complex translocates an average of 555 bp/second on nicked DNA; the R(2)M(2)S(1) complex translocates at double that speed. The 2 R subunit motors are independent and track along the helical pitch of the DNA, inducing positive supercoiling ahead of themselves. This chain is Type I restriction enzyme EcoR124I/EcoR124II specificity subunit (hsdS), found in Escherichia coli.